Reading from the N-terminus, the 387-residue chain is Phosphoglycerate kinase (387 aa).

Residues 21-23 (DLN), arginine 36, 59-62 (HLGR), arginine 113, and arginine 146 each bind substrate. ATP-binding positions include lysine 197, glutamate 314, and 340–343 (GGDT).

This sequence belongs to the phosphoglycerate kinase family. As to quaternary structure, monomer.

Its subcellular location is the cytoplasm. The catalysed reaction is (2R)-3-phosphoglycerate + ATP = (2R)-3-phospho-glyceroyl phosphate + ADP. It participates in carbohydrate degradation; glycolysis; pyruvate from D-glyceraldehyde 3-phosphate: step 2/5. The protein is Phosphoglycerate kinase of Yersinia enterocolitica serotype O:8 / biotype 1B (strain NCTC 13174 / 8081).